A 198-amino-acid polypeptide reads, in one-letter code: MTLVPMVVEPTSRGERAYDIYTRLLKERIIFITGPIEDQMASLVVAQLIFLEAENPEKDISMYINSPGGVVTAGLSIYDTMQYVKPRIATLCLGQAASMGSLLLAAGEKGMRCALPNSRIMIHQPSGGFQGQATDIEIHAKEILNIKSRLNYIYVKHTGRELSEVVASMERDNFMSADSAQDFGIIDKVIEKRLDIEV.

Residue S98 is the Nucleophile of the active site. H123 is an active-site residue.

It belongs to the peptidase S14 family. As to quaternary structure, fourteen ClpP subunits assemble into 2 heptameric rings which stack back to back to give a disk-like structure with a central cavity, resembling the structure of eukaryotic proteasomes.

The protein localises to the cytoplasm. It carries out the reaction Hydrolysis of proteins to small peptides in the presence of ATP and magnesium. alpha-casein is the usual test substrate. In the absence of ATP, only oligopeptides shorter than five residues are hydrolyzed (such as succinyl-Leu-Tyr-|-NHMec, and Leu-Tyr-Leu-|-Tyr-Trp, in which cleavage of the -Tyr-|-Leu- and -Tyr-|-Trp bonds also occurs).. Cleaves peptides in various proteins in a process that requires ATP hydrolysis. Has a chymotrypsin-like activity. Plays a major role in the degradation of misfolded proteins. The protein is ATP-dependent Clp protease proteolytic subunit of Ehrlichia ruminantium (strain Gardel).